A 267-amino-acid chain; its full sequence is MNTTHVPEPHRTEQHTENQRHWRKILDIAPIVSIAFPAAMYFIFDEDSFEGSLFLRFVTVLLPFSYSAVQYAVLLHTNRMPHNKPEGILQSMLYYTLNLLLLAFTIISILSIIAFTLDEWENNDDSLLYSITLPSFFIPLTYLLSVSCRLVPGQIGFTDTGINVLIDILILLFPRTALVSKESKHRLLYAVLFLLPILIRLLKEKYCPSGKSSLPTASWRVAVLALILILVFFAYTFMMCRSMVILNNHFGLLNKLKRVSAPSRSDK.

Belongs to the UPF0328 family.

This is UPF0328 protein ECU06_0070 from Encephalitozoon cuniculi (strain GB-M1) (Microsporidian parasite).